The following is a 319-amino-acid chain: Acetylglutamate kinase (319 aa).

Substrate contacts are provided by residues 74 to 75 (GG), arginine 96, and asparagine 210.

Belongs to the acetylglutamate kinase family. ArgB subfamily.

It localises to the cytoplasm. The catalysed reaction is N-acetyl-L-glutamate + ATP = N-acetyl-L-glutamyl 5-phosphate + ADP. It functions in the pathway amino-acid biosynthesis; L-arginine biosynthesis; N(2)-acetyl-L-ornithine from L-glutamate: step 2/4. Its function is as follows. Catalyzes the ATP-dependent phosphorylation of N-acetyl-L-glutamate. This chain is Acetylglutamate kinase, found in Pseudarthrobacter chlorophenolicus (strain ATCC 700700 / DSM 12829 / CIP 107037 / JCM 12360 / KCTC 9906 / NCIMB 13794 / A6) (Arthrobacter chlorophenolicus).